We begin with the raw amino-acid sequence, 720 residues long: Phosphoribosylformylglycinamidine synthase subunit PurL (720 aa).

The active site involves H47. Residues Y50 and K89 each contribute to the ATP site. E91 lines the Mg(2+) pocket. Residues 92–95 (SHNH) and R114 contribute to the substrate site. H93 functions as the Proton acceptor in the catalytic mechanism. D115 provides a ligand contact to Mg(2+). Q238 serves as a coordination point for substrate. Mg(2+) is bound at residue D266. 310 to 312 (ESQ) is a substrate binding site. The ATP site is built by D488 and G525. N526 serves as a coordination point for Mg(2+). Residue S528 participates in substrate binding.

It belongs to the FGAMS family. Monomer. Part of the FGAM synthase complex composed of 1 PurL, 1 PurQ and 2 PurS subunits.

The protein resides in the cytoplasm. It catalyses the reaction N(2)-formyl-N(1)-(5-phospho-beta-D-ribosyl)glycinamide + L-glutamine + ATP + H2O = 2-formamido-N(1)-(5-O-phospho-beta-D-ribosyl)acetamidine + L-glutamate + ADP + phosphate + H(+). The protein operates within purine metabolism; IMP biosynthesis via de novo pathway; 5-amino-1-(5-phospho-D-ribosyl)imidazole from N(2)-formyl-N(1)-(5-phospho-D-ribosyl)glycinamide: step 1/2. Functionally, part of the phosphoribosylformylglycinamidine synthase complex involved in the purines biosynthetic pathway. Catalyzes the ATP-dependent conversion of formylglycinamide ribonucleotide (FGAR) and glutamine to yield formylglycinamidine ribonucleotide (FGAM) and glutamate. The FGAM synthase complex is composed of three subunits. PurQ produces an ammonia molecule by converting glutamine to glutamate. PurL transfers the ammonia molecule to FGAR to form FGAM in an ATP-dependent manner. PurS interacts with PurQ and PurL and is thought to assist in the transfer of the ammonia molecule from PurQ to PurL. The chain is Phosphoribosylformylglycinamidine synthase subunit PurL from Cereibacter sphaeroides (strain ATCC 17023 / DSM 158 / JCM 6121 / CCUG 31486 / LMG 2827 / NBRC 12203 / NCIMB 8253 / ATH 2.4.1.) (Rhodobacter sphaeroides).